Consider the following 370-residue polypeptide: Peptide chain release factor 2 (370 aa).

N5-methylglutamine is present on Gln252.

It belongs to the prokaryotic/mitochondrial release factor family. In terms of processing, methylated by PrmC. Methylation increases the termination efficiency of RF2.

The protein localises to the cytoplasm. In terms of biological role, peptide chain release factor 2 directs the termination of translation in response to the peptide chain termination codons UGA and UAA. The sequence is that of Peptide chain release factor 2 from Mycobacterium avium (strain 104).